The following is a 458-amino-acid chain: Dihydrolipoyl dehydrogenase (458 aa).

Residues 30–38, Lys-47, and Ala-112 each bind FAD; that span reads DKGKLGGTC. Residues Cys-38 and Cys-43 are joined by a disulfide bond. NAD(+)-binding positions include 177-181, Glu-200, and 263-266; these read GGGVI and AIGR. The FAD site is built by Asp-305 and Ala-313. His-437 functions as the Proton acceptor in the catalytic mechanism.

Belongs to the class-I pyridine nucleotide-disulfide oxidoreductase family. As to quaternary structure, homodimer. FAD serves as cofactor.

The protein localises to the cytoplasm. It carries out the reaction N(6)-[(R)-dihydrolipoyl]-L-lysyl-[protein] + NAD(+) = N(6)-[(R)-lipoyl]-L-lysyl-[protein] + NADH + H(+). It participates in ketone degradation; acetoin degradation. The polypeptide is Dihydrolipoyl dehydrogenase (acoL) (Bacillus subtilis (strain 168)).